Here is a 74-residue protein sequence, read N- to C-terminus: MDMVSLKFIGVGCMAIGMLGAALGVSNIFSSLLNSIARNPSATEQLQRMALIGAGLAEAMGLFSFVIAMLLIFS.

2 consecutive transmembrane segments (helical) span residues 8-28 (FIGV…VSNI) and 52-72 (IGAG…MLLI).

Belongs to the ATPase C chain family. In terms of assembly, F-type ATPases have 2 components, F(1) - the catalytic core - and F(0) - the membrane proton channel. F(1) has five subunits: alpha(3), beta(3), gamma(1), delta(1), epsilon(1). F(0) has three main subunits: a(1), b(2) and c(10-14). The alpha and beta chains form an alternating ring which encloses part of the gamma chain. F(1) is attached to F(0) by a central stalk formed by the gamma and epsilon chains, while a peripheral stalk is formed by the delta and b chains.

Its subcellular location is the cell inner membrane. Its function is as follows. F(1)F(0) ATP synthase produces ATP from ADP in the presence of a proton or sodium gradient. F-type ATPases consist of two structural domains, F(1) containing the extramembraneous catalytic core and F(0) containing the membrane proton channel, linked together by a central stalk and a peripheral stalk. During catalysis, ATP synthesis in the catalytic domain of F(1) is coupled via a rotary mechanism of the central stalk subunits to proton translocation. Functionally, key component of the F(0) channel; it plays a direct role in translocation across the membrane. A homomeric c-ring of between 10-14 subunits forms the central stalk rotor element with the F(1) delta and epsilon subunits. The chain is ATP synthase subunit c from Rickettsia bellii (strain RML369-C).